A 376-amino-acid chain; its full sequence is Major capsid protein (376 aa).

It is found in the virion. Assembles to form an icosahedral capsid. This Pseudomonas aeruginosa (Bacteriophage KPP25) protein is Major capsid protein.